A 331-amino-acid chain; its full sequence is Vitamin B12 import system permease protein BtuC (331 aa).

Transmembrane regions (helical) follow at residues 20–42, 62–84, 91–113, 117–136, 148–170, 190–209, 240–262, 277–299, and 306–325; these read LLIG…WLSP, LLAA…VLLG, GVVG…FPSL, VAFM…LLVV, LLLV…FYFS, SWYQ…WLVL, LAIA…VGLV, LLLP…IARL, and LPLG…WMLV.

This sequence belongs to the binding-protein-dependent transport system permease family. FecCD subfamily. The complex is composed of two ATP-binding proteins (BtuD), two transmembrane proteins (BtuC) and a solute-binding protein (BtuF).

It is found in the cell inner membrane. Its function is as follows. Part of the ABC transporter complex BtuCDF involved in vitamin B12 import. Involved in the translocation of the substrate across the membrane. The polypeptide is Vitamin B12 import system permease protein BtuC (Vibrio cholerae serotype O1 (strain ATCC 39315 / El Tor Inaba N16961)).